Consider the following 389-residue polypeptide: Agamous-like MADS-box protein AGL65 (389 aa).

The MADS-box domain maps to 1-61 (MGRVKLKIKR…GRATAFHGEH (61 aa)). 2 coiled-coil regions span residues 77–131 (QERT…LMEC) and 293–325 (GMEE…QQQD). Positions 310–343 (NLQQQQQQQQQQQQQDPSMYDPMANNNGGCFQIP) are disordered. Positions 312–324 (QQQQQQQQQQQQQ) are enriched in low complexity.

As to quaternary structure, forms a heterodimer with AGL104. Expressed in pollen.

It localises to the nucleus. Functionally, probable transcription factor that forms a heterodimer with the MADS-box protein AGL104 and is involved in the regulation of pollen maturation at the late stages of pollen development and pollen tube growth. This chain is Agamous-like MADS-box protein AGL65, found in Arabidopsis thaliana (Mouse-ear cress).